The primary structure comprises 629 residues: tRNA uridine 5-carboxymethylaminomethyl modification enzyme MnmG (629 aa).

FAD is bound by residues 14–19 (GAGHAG), V126, and S181. 273–287 (GPRYCPSIEDKVVRF) contacts NAD(+). Q370 contacts FAD.

This sequence belongs to the MnmG family. In terms of assembly, homodimer. Heterotetramer of two MnmE and two MnmG subunits. It depends on FAD as a cofactor.

It localises to the cytoplasm. Functionally, NAD-binding protein involved in the addition of a carboxymethylaminomethyl (cmnm) group at the wobble position (U34) of certain tRNAs, forming tRNA-cmnm(5)s(2)U34. The polypeptide is tRNA uridine 5-carboxymethylaminomethyl modification enzyme MnmG (Bacillus cereus (strain ATCC 14579 / DSM 31 / CCUG 7414 / JCM 2152 / NBRC 15305 / NCIMB 9373 / NCTC 2599 / NRRL B-3711)).